Consider the following 727-residue polypeptide: Glucans biosynthesis glucosyltransferase H (727 aa).

Residues 18–38 are disordered; that stretch reads SAMPNERPGAMEPQNLSKMPE. The next 7 membrane-spanning stretches (helical) occupy residues 58 to 78, 97 to 117, 278 to 298, 408 to 428, 460 to 480, 496 to 516, and 572 to 592; these read FLVVGGALLLSLFAIYEMGAV, VNFCWIALAFCSGIAGFLILL, LQQFAARIYGPVIGTGLGWWV, IMAYLSSPFWLMLILTGLMLA, LFYITMGVLFGPKVFGVLLLL, IFSVIFEVILSALIAPIMMFI, and LLAWMSPALIGLWIAVPISAW.

Belongs to the glycosyltransferase 2 family. OpgH subfamily.

Its subcellular location is the cell inner membrane. Its pathway is glycan metabolism; osmoregulated periplasmic glucan (OPG) biosynthesis. Involved in the biosynthesis of osmoregulated periplasmic glucans (OPGs). The protein is Glucans biosynthesis glucosyltransferase H of Shewanella baltica (strain OS185).